Consider the following 228-residue polypeptide: ATP-dependent dethiobiotin synthetase BioD (228 aa).

12–17 (DVGKTY) contacts ATP. Thr16 contributes to the Mg(2+) binding site. Residue Lys37 is part of the active site. Residues Asp53, 114 to 117 (EGMG), 174 to 175 (ND), 203 to 205 (PFI), and Asn210 each bind ATP. Mg(2+) is bound by residues Asp53 and Glu114.

Belongs to the dethiobiotin synthetase family. In terms of assembly, homodimer. Mg(2+) serves as cofactor.

Its subcellular location is the cytoplasm. The catalysed reaction is (7R,8S)-7,8-diammoniononanoate + CO2 + ATP = (4R,5S)-dethiobiotin + ADP + phosphate + 3 H(+). It functions in the pathway cofactor biosynthesis; biotin biosynthesis; biotin from 7,8-diaminononanoate: step 1/2. Functionally, catalyzes a mechanistically unusual reaction, the ATP-dependent insertion of CO2 between the N7 and N8 nitrogen atoms of 7,8-diaminopelargonic acid (DAPA, also called 7,8-diammoniononanoate) to form a ureido ring. The protein is ATP-dependent dethiobiotin synthetase BioD of Nitrosopumilus maritimus (strain SCM1).